The primary structure comprises 283 residues: Probable endonuclease 4 (283 aa).

Residues His-69, His-109, Glu-144, Asp-178, His-181, His-215, Asp-228, His-230, and Glu-260 each contribute to the Zn(2+) site.

It belongs to the AP endonuclease 2 family. The cofactor is Zn(2+).

The enzyme catalyses Endonucleolytic cleavage to 5'-phosphooligonucleotide end-products.. Functionally, endonuclease IV plays a role in DNA repair. It cleaves phosphodiester bonds at apurinic or apyrimidinic (AP) sites, generating a 3'-hydroxyl group and a 5'-terminal sugar phosphate. In Thermosipho melanesiensis (strain DSM 12029 / CIP 104789 / BI429), this protein is Probable endonuclease 4.